A 482-amino-acid chain; its full sequence is tRNA sulfurtransferase (482 aa).

The THUMP domain occupies 61–165 (LAIRDALTRI…DDRLLLIKGR (105 aa)). ATP contacts are provided by residues 183-184 (LI), Lys265, Gly287, and Gln296. Residues Cys344 and Cys456 are joined by a disulfide bond. One can recognise a Rhodanese domain in the interval 404–482 (FGPNDVILDI…GFNNVKVYRP (79 aa)). Cys456 (cysteine persulfide intermediate) is an active-site residue.

This sequence belongs to the ThiI family.

The protein resides in the cytoplasm. The catalysed reaction is [ThiI sulfur-carrier protein]-S-sulfanyl-L-cysteine + a uridine in tRNA + 2 reduced [2Fe-2S]-[ferredoxin] + ATP + H(+) = [ThiI sulfur-carrier protein]-L-cysteine + a 4-thiouridine in tRNA + 2 oxidized [2Fe-2S]-[ferredoxin] + AMP + diphosphate. It carries out the reaction [ThiS sulfur-carrier protein]-C-terminal Gly-Gly-AMP + S-sulfanyl-L-cysteinyl-[cysteine desulfurase] + AH2 = [ThiS sulfur-carrier protein]-C-terminal-Gly-aminoethanethioate + L-cysteinyl-[cysteine desulfurase] + A + AMP + 2 H(+). The protein operates within cofactor biosynthesis; thiamine diphosphate biosynthesis. In terms of biological role, catalyzes the ATP-dependent transfer of a sulfur to tRNA to produce 4-thiouridine in position 8 of tRNAs, which functions as a near-UV photosensor. Also catalyzes the transfer of sulfur to the sulfur carrier protein ThiS, forming ThiS-thiocarboxylate. This is a step in the synthesis of thiazole, in the thiamine biosynthesis pathway. The sulfur is donated as persulfide by IscS. In Escherichia coli (strain ATCC 8739 / DSM 1576 / NBRC 3972 / NCIMB 8545 / WDCM 00012 / Crooks), this protein is tRNA sulfurtransferase.